We begin with the raw amino-acid sequence, 267 residues long: 4-hydroxy-tetrahydrodipicolinate reductase (267 aa).

NAD(+) contacts are provided by residues 8–13 (GAAGRM) and D34. R35 serves as a coordination point for NADP(+). NAD(+)-binding positions include 98–100 (GTT) and 122–125 (AANF). The Proton donor/acceptor role is filled by H155. Position 156 (H156) interacts with (S)-2,3,4,5-tetrahydrodipicolinate. Residue K159 is the Proton donor of the active site. 165-166 (GT) serves as a coordination point for (S)-2,3,4,5-tetrahydrodipicolinate.

Belongs to the DapB family.

Its subcellular location is the cytoplasm. It carries out the reaction (S)-2,3,4,5-tetrahydrodipicolinate + NAD(+) + H2O = (2S,4S)-4-hydroxy-2,3,4,5-tetrahydrodipicolinate + NADH + H(+). The catalysed reaction is (S)-2,3,4,5-tetrahydrodipicolinate + NADP(+) + H2O = (2S,4S)-4-hydroxy-2,3,4,5-tetrahydrodipicolinate + NADPH + H(+). It participates in amino-acid biosynthesis; L-lysine biosynthesis via DAP pathway; (S)-tetrahydrodipicolinate from L-aspartate: step 4/4. Catalyzes the conversion of 4-hydroxy-tetrahydrodipicolinate (HTPA) to tetrahydrodipicolinate. The polypeptide is 4-hydroxy-tetrahydrodipicolinate reductase (Pseudomonas putida (strain ATCC 47054 / DSM 6125 / CFBP 8728 / NCIMB 11950 / KT2440)).